Reading from the N-terminus, the 301-residue chain is Hydroxyquinol 1,2-dioxygenase (301 aa).

The Fe cation site is built by Tyr-169, Tyr-202, His-226, and His-228.

The protein belongs to the intradiol ring-cleavage dioxygenase family. The cofactor is Fe(3+).

The catalysed reaction is benzene-1,2,4-triol + O2 = maleylacetate + 2 H(+). The protein operates within aromatic compound metabolism. In terms of biological role, involved in resorcinol degradation. Catalyzes the conversion of hydroxyquinol to malelylacetate. Also shows weak activity with catechol, 3-methylcatechol and 4-methylcatechol, but cannot use 4-chlorocatechol, 4-nitrocatechol or protocatechuate. This is Hydroxyquinol 1,2-dioxygenase from Corynebacterium glutamicum (strain ATCC 13032 / DSM 20300 / JCM 1318 / BCRC 11384 / CCUG 27702 / LMG 3730 / NBRC 12168 / NCIMB 10025 / NRRL B-2784 / 534).